A 332-amino-acid chain; its full sequence is D-galactose/methyl-galactoside binding periplasmic protein MglB (332 aa).

The N-terminal stretch at 1–23 is a signal peptide; it reads MNKKVLTLSAVMASMLFGAAAHA. The beta-D-galactose site is built by aspartate 37 and asparagine 114. Beta-D-glucose contacts are provided by aspartate 37 and asparagine 114. Aspartate 157, asparagine 159, aspartate 161, glutamine 163, and glutamine 165 together coordinate Ca(2+). Histidine 175, aspartate 177, and arginine 181 together coordinate beta-D-galactose. Positions 175, 177, and 181 each coordinate beta-D-glucose. A Ca(2+)-binding site is contributed by glutamate 228. Beta-D-galactose-binding residues include asparagine 234, aspartate 259, and asparagine 279. Residues asparagine 234, aspartate 259, and asparagine 279 each coordinate beta-D-glucose.

It belongs to the bacterial solute-binding protein 2 family. The ABC transporter complex is composed of one ATP-binding protein (MglA), two transmembrane proteins (MglC) and a solute-binding protein (MglB).

It is found in the periplasm. Its function is as follows. Part of the ABC transporter complex MglABC involved in galactose/methyl galactoside import. In addition, binds D-galactose and D-glucose and plays a role in the chemotaxis towards these two sugars by interacting with the Trg chemoreceptor. The polypeptide is D-galactose/methyl-galactoside binding periplasmic protein MglB (mglB) (Escherichia coli O6:H1 (strain CFT073 / ATCC 700928 / UPEC)).